Consider the following 214-residue polypeptide: MWLIVGLGNPGETYARTRHNIGFRVVTELAQRHHLRFTHKRAKAEIAEGEIAGQRVALALPQTYMNLSGQAVVGLRQWYKIDPATELLVVYDDVDLPFGVLRLRERGSAGTHNGMRSIVALLGSQVFPRLRIGIDRPPVAWNLADYVLARFTPEQEAQLPEVTRRAADALELVLREGIVVAMNRINAPPPKPEKKRGSETSDPSAESADHAGGG.

A tRNA-binding site is contributed by Tyr-14. His-19 acts as the Proton acceptor in catalysis. TRNA-binding residues include Tyr-64, Asn-66, and Asn-113. The segment at 184–214 (RINAPPPKPEKKRGSETSDPSAESADHAGGG) is disordered.

This sequence belongs to the PTH family. Monomer.

Its subcellular location is the cytoplasm. It carries out the reaction an N-acyl-L-alpha-aminoacyl-tRNA + H2O = an N-acyl-L-amino acid + a tRNA + H(+). Its function is as follows. Hydrolyzes ribosome-free peptidyl-tRNAs (with 1 or more amino acids incorporated), which drop off the ribosome during protein synthesis, or as a result of ribosome stalling. Catalyzes the release of premature peptidyl moieties from peptidyl-tRNA molecules trapped in stalled 50S ribosomal subunits, and thus maintains levels of free tRNAs and 50S ribosomes. This chain is Peptidyl-tRNA hydrolase, found in Roseiflexus castenholzii (strain DSM 13941 / HLO8).